The chain runs to 100 residues: C-X-C motif chemokine 2 (100 aa).

The first 27 residues, Met-1–Gly-27, serve as a signal peptide directing secretion. 2 cysteine pairs are disulfide-bonded: Cys-36/Cys-62 and Cys-38/Cys-78.

This sequence belongs to the intercrine alpha (chemokine CxC) family. In terms of assembly, homotetramer.

It localises to the secreted. Functionally, chemotactic for human polymorphonuclear leukocytes but does not induce chemokinesis or an oxidative burst. This Mus musculus (Mouse) protein is C-X-C motif chemokine 2 (Cxcl2).